A 349-amino-acid chain; its full sequence is Ferredoxin--NADP reductase 1 (349 aa).

Positions 36, 44, 48, 88, 123, 290, and 331 each coordinate FAD.

The protein belongs to the ferredoxin--NADP reductase type 2 family. As to quaternary structure, homodimer. FAD is required as a cofactor.

It carries out the reaction 2 reduced [2Fe-2S]-[ferredoxin] + NADP(+) + H(+) = 2 oxidized [2Fe-2S]-[ferredoxin] + NADPH. This chain is Ferredoxin--NADP reductase 1, found in Bacillus mycoides (strain KBAB4) (Bacillus weihenstephanensis).